A 530-amino-acid polypeptide reads, in one-letter code: Equilibrative nucleoside transporter 4 (530 aa).

A disordered region spans residues 1-21; that stretch reads MGSVGSQRLEEPSVAGTPDPG. Over 1-68 the chain is Extracellular; that stretch reads MGSVGSQRLE…DEPVPDDRYH (68 aa). A helical membrane pass occupies residues 69–89; the sequence is AIYFAMLLAGVGFLLPYNSFI. The Cytoplasmic segment spans residues 90 to 101; that stretch reads TDVDYLHHKYPG. A helical membrane pass occupies residues 102–122; the sequence is TSIVFDMSLTYILVALAAVLL. Topologically, residues 123–139 are extracellular; it reads NNVLVERLTLHTRITAG. Residues 140–160 form a helical membrane-spanning segment; it reads YLLALGPLLFISICDVWLQLF. Residues 161–166 are Cytoplasmic-facing; the sequence is SRDQAY. The helical transmembrane segment at 167-187 threads the bilayer; that stretch reads AINLAAVGTVAFGCTVQQSSF. The Extracellular segment spans residues 188–231; that stretch reads YGYTGMLPKRYTQGVMTGESTAGVMISLSRILTKLLLPDERAST. The chain crosses the membrane as a helical span at residues 232 to 252; sequence LIFFLVSVALELLCFLLHLLV. Residues 253–351 lie on the Cytoplasmic side of the membrane; it reads RRSRFVLFYT…LLLHRYVVAR (99 aa). A helical membrane pass occupies residues 352–372; that stretch reads VIWADMLSIAVTYFITLCLFP. The Extracellular portion of the chain corresponds to 373–381; the sequence is GLESEIRHC. A helical transmembrane segment spans residues 382-402; sequence ILGEWLPILIMAVFNLSDFVG. Residues 403–416 are Cytoplasmic-facing; the sequence is KILAALPVDWRGTH. A helical transmembrane segment spans residues 417–437; that stretch reads LLACSCLRVVFIPLFILCVYP. Over 438–450 the chain is Extracellular; the sequence is SGMPALRHPAWPC. The chain crosses the membrane as a helical span at residues 451–471; sequence IFSLLMGISNGYFGSVPMILA. Over 472–486 the chain is Cytoplasmic; it reads AGKVSPKQRELAGNT. Residues 487–509 traverse the membrane as a helical segment; sequence MTVSYMSGLTLGSAVAYCTYSLT. The Extracellular segment spans residues 510-530; sequence RDAHGSCLHASTANGSILAGL. N-linked (GlcNAc...) asparagine glycosylation is present at Asn523.

It belongs to the SLC29A/ENT transporter (TC 2.A.57) family. Post-translationally, N-glycosylated. As to expression, mainly expressed in brain and skeletal muscle. In brain, expressed in cerebellum, cerebral cortex, medulla oblongata, occipital pole, frontal and temporal lobes putamen, spinal cord, substancia nigra, hippocampus, caudate nucleus, nucleus accumbens, pons and choroid plexus. Expressed in heart, in both cardiomyocytes and vascular endothelial cells. Also expressed in adrenal gland, small intestine, pancreas, kidney, liver, bone marrow, lymph node. Located in endometrial stroma, where the expression is high in the proliferative phase, decreases during the secretory phase, and is no longer detectable in the menstrual phase.

Its subcellular location is the cell membrane. It is found in the apical cell membrane. The catalysed reaction is serotonin(out) = serotonin(in). It carries out the reaction dopamine(out) = dopamine(in). The enzyme catalyses (R)-noradrenaline(out) = (R)-noradrenaline(in). It catalyses the reaction (R)-adrenaline(out) = (R)-adrenaline(in). The catalysed reaction is histamine(out) = histamine(in). It carries out the reaction tyramine(in) = tyramine(out). The enzyme catalyses guanidine(out) = guanidine(in). It catalyses the reaction adenosine(in) = adenosine(out). Activated at acidic pH. In terms of biological role, electrogenic voltage-dependent transporter that mediates the transport of a variety of endogenous bioactive amines, cationic xenobiotics and drugs. Utilizes the physiologic inside-negative membrane potential as a driving force to facilitate cellular uptake of organic cations. Functions as a Na(+)- and Cl(-)-independent bidirectional transporter. Substrate transport is pH-dependent and enhanced under acidic condition, which is most likely the result of allosteric changes in the transporter structure. Implicated in monoamine neurotransmitters uptake such as serotonin, dopamine, adrenaline/epinephrine, noradrenaline/norepinephrine, histamine and tyramine, thereby supporting a role in homeostatic regulation of aminergic neurotransmission in the central nervous system. Also responsible for the uptake of bioactive amines and drugs through the blood-cerebrospinal fluid (CSF) barrier, from the CSF into choroid plexus epithelial cells, thereby playing a significant role in the clearance of cationic neurotoxins, xenobiotics and metabolic waste in the brain. Involved in bidirectional transport of the purine nucleoside adenosine and plays a role in the regulation of extracellular adenosine concentrations in cardiac tissues, in particular during ischemia. May be involved in organic cation uptake from the tubular lumen into renal tubular cells, thereby contributing to organic cation reabsorption in the kidney. Also transports guanidine. The sequence is that of Equilibrative nucleoside transporter 4 from Homo sapiens (Human).